A 381-amino-acid polypeptide reads, in one-letter code: 1-deoxy-D-xylulose 5-phosphate reductoisomerase (381 aa).

NADPH-binding residues include Thr10, Gly11, Ser12, Ile13, Gly36, Lys37, Asn38, and Asn120. Lys121 contributes to the 1-deoxy-D-xylulose 5-phosphate binding site. Glu122 is an NADPH binding site. Residue Asp146 participates in Mn(2+) binding. 1-deoxy-D-xylulose 5-phosphate contacts are provided by Ser147, Glu148, Ser172, and His195. Glu148 lines the Mn(2+) pocket. Gly201 contacts NADPH. The 1-deoxy-D-xylulose 5-phosphate site is built by Ser208, Asn213, Lys214, and Glu217. Glu217 lines the Mn(2+) pocket.

The protein belongs to the DXR family. Mg(2+) serves as cofactor. It depends on Mn(2+) as a cofactor.

It catalyses the reaction 2-C-methyl-D-erythritol 4-phosphate + NADP(+) = 1-deoxy-D-xylulose 5-phosphate + NADPH + H(+). Its pathway is isoprenoid biosynthesis; isopentenyl diphosphate biosynthesis via DXP pathway; isopentenyl diphosphate from 1-deoxy-D-xylulose 5-phosphate: step 1/6. Functionally, catalyzes the NADPH-dependent rearrangement and reduction of 1-deoxy-D-xylulose-5-phosphate (DXP) to 2-C-methyl-D-erythritol 4-phosphate (MEP). In Lysinibacillus sphaericus (strain C3-41), this protein is 1-deoxy-D-xylulose 5-phosphate reductoisomerase.